A 1434-amino-acid chain; its full sequence is Probable ATP-dependent RNA helicase spindle-E (1434 aa).

The Helicase ATP-binding domain maps to 125 to 292 (LAAINAHPVV…FTTTNSIPPV (168 aa)). An ATP-binding site is contributed by 138-145 (GETGCGKT). Residues 238–241 (DEVH) carry the DEAH box motif. Residues 354–526 (QSRQSYDEAL…NSVLKAKVLN (173 aa)) form the Helicase C-terminal domain. The Tudor domain occupies 938 to 1001 (ASAIAKGMMV…RLMPRELTEQ (64 aa)).

This sequence belongs to the DEAD box helicase family. DEAH subfamily.

The protein resides in the cytoplasm. It is found in the perinuclear region. It localises to the cytoplasmic ribonucleoprotein granule. It carries out the reaction ATP + H2O = ADP + phosphate + H(+). Its function is as follows. Probable ATP-binding RNA helicase which plays a central role during spermatogenesis and oogenesis by repressing transposable elements and preventing their mobilization, which is essential for the germline integrity. Acts via the piRNA metabolic process, which mediates the repression of transposable elements during meiosis by forming complexes composed of piRNAs and Piwi and govern the methylation and subsequent repression of transposons. Involved in the repression of LTR retrotransposon copia. Also involved in telomere regulation by repressing specialized telomeric retroelements HeT-A, TAHRE, and TART; Drosophila telomeres being maintained by transposition of specialized telomeric retroelements. Involved in telomeric trans-silencing, a repression mechanism by which a transposon or a transgene inserted in subtelomeric heterochromatin has the capacity to repress in trans in the female germline, a homologous transposon, or transgene located in euchromatin. Involved in the repression of testis-expressed Stellate genes by the homologous Su(Ste) repeats. Required for anteroposterior and dorsoventral axis formation during oogenesis. Key component of the perinuclear meiotic nuage, an electron dense structure involved in the post-transcriptional regulation of transposons and mRNAs; required for recruitment of other nuage comonents including vas, krimp, aub and mael. May have a role in production of piwi-interacting RNA (piRNA). In Drosophila melanogaster (Fruit fly), this protein is Probable ATP-dependent RNA helicase spindle-E.